Here is an 877-residue protein sequence, read N- to C-terminus: Phosphoenolpyruvate carboxylase (877 aa).

Residues H138 and K544 contribute to the active site.

It belongs to the PEPCase type 1 family. Mg(2+) is required as a cofactor.

The catalysed reaction is oxaloacetate + phosphate = phosphoenolpyruvate + hydrogencarbonate. Forms oxaloacetate, a four-carbon dicarboxylic acid source for the tricarboxylic acid cycle. This chain is Phosphoenolpyruvate carboxylase, found in Vibrio parahaemolyticus serotype O3:K6 (strain RIMD 2210633).